A 156-amino-acid polypeptide reads, in one-letter code: Arginine repressor (156 aa).

The protein belongs to the ArgR family.

It is found in the cytoplasm. Its pathway is amino-acid biosynthesis; L-arginine biosynthesis [regulation]. Functionally, regulates arginine biosynthesis genes. This Salmonella agona (strain SL483) protein is Arginine repressor.